Here is a 272-residue protein sequence, read N- to C-terminus: 5'-AMP-activated protein kinase subunit beta-2 (272 aa).

Residues 1-52 (MGNTTSDRVSGERHGAKAARSEGAGGHAPGKEHKIMVGSTDDPSVFSLPDSK) are disordered. Ser39 is subject to Phosphoserine. At Thr40 the chain carries Phosphothreonine. Phosphoserine; by ULK1 is present on Ser69. Phosphoserine occurs at positions 95 and 108. The residue at position 148 (Thr148) is a Phosphothreonine. Phosphoserine is present on residues Ser158, Ser170, Ser174, and Ser184.

Belongs to the 5'-AMP-activated protein kinase beta subunit family. AMPK is a heterotrimer of an alpha catalytic subunit (PRKAA1 or PRKAA2), a beta (PRKAB1 or PRKAB2) and a gamma non-catalytic subunits (PRKAG1, PRKAG2 or PRKAG3). Post-translationally, phosphorylated when associated with the catalytic subunit (PRKAA1 or PRKAA2). Phosphorylated by ULK1 and ULK2; leading to negatively regulate AMPK activity and suggesting the existence of a regulatory feedback loop between ULK1, ULK2 and AMPK.

Non-catalytic subunit of AMP-activated protein kinase (AMPK), an energy sensor protein kinase that plays a key role in regulating cellular energy metabolism. In response to reduction of intracellular ATP levels, AMPK activates energy-producing pathways and inhibits energy-consuming processes: inhibits protein, carbohydrate and lipid biosynthesis, as well as cell growth and proliferation. AMPK acts via direct phosphorylation of metabolic enzymes, and by longer-term effects via phosphorylation of transcription regulators. Also acts as a regulator of cellular polarity by remodeling the actin cytoskeleton; probably by indirectly activating myosin. Beta non-catalytic subunit acts as a scaffold on which the AMPK complex assembles, via its C-terminus that bridges alpha (PRKAA1 or PRKAA2) and gamma subunits (PRKAG1, PRKAG2 or PRKAG3). This Homo sapiens (Human) protein is 5'-AMP-activated protein kinase subunit beta-2 (PRKAB2).